We begin with the raw amino-acid sequence, 663 residues long: Polyunsaturated fatty acid lipoxygenase ALOX15 (663 aa).

Residues 2–115 enclose the PLAT domain; the sequence is GVYRVCVSTG…VQSLPVGTGC (114 aa). The 548-residue stretch at 116 to 663 folds into the Lipoxygenase domain; the sequence is TTVGDPQGLF…PSIVENSVAI (548 aa). Fe cation is bound by residues histidine 361, histidine 366, histidine 541, histidine 545, and isoleucine 663.

Belongs to the lipoxygenase family. In terms of assembly, interacts with PEBP1; in response to IL13/interleukin-13, prevents the interaction of PEBP1 with RAF1 to activate the ERK signaling cascade. It depends on Fe cation as a cofactor. Detected in reticulocytes (at protein level).

Its subcellular location is the cytoplasm. It is found in the cytosol. The protein resides in the cell membrane. The protein localises to the lipid droplet. It carries out the reaction (5Z,8Z,11Z,14Z)-eicosatetraenoate + O2 = (12S)-hydroperoxy-(5Z,8Z,10E,14Z)-eicosatetraenoate. It catalyses the reaction (5Z,8Z,11Z,14Z)-eicosatetraenoate + O2 = (15S)-hydroperoxy-(5Z,8Z,11Z,13E)-eicosatetraenoate. The enzyme catalyses (9Z,12Z)-octadecadienoate + O2 = (13S)-hydroperoxy-(9Z,11E)-octadecadienoate. The catalysed reaction is (5Z,8Z,11Z,14Z)-eicosatetraenoate + 2 O2 = (14R,15S)-dihydroperoxy-(5Z,8Z,10E,12E)-eicosatetraenoate. It carries out the reaction (5Z,8Z,11Z,14Z)-eicosatetraenoate + 2 O2 = (8S,15S)-dihydroperoxy-(5Z,9E,11Z,13E)-eicosatetraenoate. It catalyses the reaction (14S,15R)-epoxy-(5Z,8Z,11Z)-eicosatrienoate + O2 = (8S)-hydroperoxy-(14S,15R)-epoxy-(5Z,9E,11Z)-eicosatrienoate. The enzyme catalyses (14S,15R)-epoxy-(5Z,8Z,11Z)-eicosatrienoate + O2 = (12S)-hydroperoxy-(14S,15R)-epoxy-(5Z,8Z,10E)-eicosatrienoate. The catalysed reaction is (14R,15S)-epoxy-(5Z,8Z,11Z)-eicosatrienoate + O2 = (5S)-hydroperoxy-(14R,15S)-epoxy-(6E,8Z,11Z)-eicosatrienoate. It carries out the reaction (14R,15S)-epoxy-(5Z,8Z,11Z)-eicosatrienoate + O2 = (12S)-hydroperoxy-(14R,15S)-epoxy-(5Z,8Z,10E)-eicosatrienoate. It catalyses the reaction (15R)-hydroperoxy-(5Z,8Z,11Z,13E)-eicosatetraenoate = 15-oxo-(5Z,8Z,11Z,13E)-eicosatetraenoate + H2O. The enzyme catalyses (15S)-hydroperoxy-(5Z,8Z,11Z,13E)-eicosatetraenoate = (14S,15S)-epoxy-(5Z,8Z,10E,12E)-eicosatetraenoate + H2O. The catalysed reaction is (12S)-hydroperoxy-(5Z,8Z,10E,14Z)-eicosatetraenoate = (8S)-hydroxy-(11S,12S)-epoxy-(5Z,9E,14Z)-eicosatrienoate. It carries out the reaction (4Z,7Z,10Z,13Z,16Z)-docosapentaenoate + O2 = 14-hydroperoxy-(4Z,7Z,10Z,12E,16Z)-docosapentaenoate. It catalyses the reaction (7Z,10Z,13Z,16Z,19Z)-docosapentaenoate + O2 = 14-hydroperoxy-(7Z,10Z,12E,16Z,19Z)-docosapentaenoate. The enzyme catalyses (4Z,7Z,10Z,13Z,16Z,19Z)-docosahexaenoate + O2 = (14S)-hydroperoxy-(4Z,7Z,10Z,12E,16Z,19Z)-docosahexaenoate. The catalysed reaction is (4Z,7Z,10Z,13Z,16Z,19Z)-docosahexaenoate + O2 = (17S)-hydroperoxy-(4Z,7Z,10Z,13Z,15E,19Z)-docosahexaenoate. It carries out the reaction (7S)-hydroperoxy-(4Z,8E,10Z,13Z,16Z,19Z)-docosahexaenoate + O2 = (7S,14S)-dihydroperoxy-(4Z,8E,10Z,12E,16Z,19Z)-docosahexaenoate. It catalyses the reaction (7S)-hydroperoxy-(4Z,8E,10Z,13Z,16Z,19Z)-docosahexaenoate + O2 = (7S,17S)-dihydroperoxy-(4Z,8E,10Z,13Z,15E,19Z)-docosahexaenoate. The enzyme catalyses (4Z,7Z,10Z,13Z,16Z,19Z)-docosahexaenoate + O2 = (11S)-hydroperoxy-(4Z,7Z,9E,13Z,16Z,19Z)-docosahexaenoate. The catalysed reaction is N-(5Z,8Z,11Z,14Z)-eicosatetraenoyl-taurine + O2 = N-(15S)-hydroperoxy-(5Z,8Z,11Z,13E)-eicosatetraenoyl-taurine. It carries out the reaction N-(5Z,8Z,11Z,14Z)-eicosatetraenoyl-gamma-aminobutanoate + O2 = N-(15S)-hydroperoxy-(5Z,8Z,11Z,13E)-eicosatetraenoyl-gamma-aminobutanoate. It catalyses the reaction N-(5Z,8Z,11Z,14Z)-eicosatetraenoyl-glycine + O2 = N-(15S)-hydroperoxy-(5Z,8Z,11Z,13E)-eicosatetraenoyl-glycine. The enzyme catalyses N-(5Z,8Z,11Z,14Z)-eicosatetraenoyl-L-alanine + O2 = N-(15S)-hydroperoxy-(5Z,8Z,11Z,13E)-eicosatetraenoyl-alanine. The catalysed reaction is N-(5Z,8Z,11Z,14Z)-eicosatetraenoyl-taurine + O2 = N-(12S)-hydroperoxy-(5Z,8Z,10E,14Z)-eicosatetraenoyl-taurine. It carries out the reaction N-(5Z,8Z,11Z,14Z)-eicosatetraenoyl-gamma-aminobutanoate + O2 = N-(12S)-hydroperoxy-(5Z,8Z,10E,14Z)-eicosatetraenoyl-gamma-aminobutanoate. It catalyses the reaction N-(5Z,8Z,11Z,14Z)-eicosatetraenoyl-glycine + O2 = N-(12S)-hydroperoxy-(5Z,8Z,10E,14Z)-eicosatetraenoyl-glycine. The enzyme catalyses N-(5Z,8Z,11Z,14Z)-eicosatetraenoyl-L-alanine + O2 = N-(12S)-hydroperoxy-(5Z,8Z,10E,14Z)-eicosatetraenoyl-alanine. Its pathway is lipid metabolism; hydroperoxy eicosatetraenoic acid biosynthesis. In terms of biological role, non-heme iron-containing dioxygenase that catalyzes the stereo-specific peroxidation of free and esterified polyunsaturated fatty acids generating a spectrum of bioactive lipid mediators. It inserts peroxyl groups at C12 or C15 of arachidonate ((5Z,8Z,11Z,14Z)-eicosatetraenoate) producing both 12-hydroperoxyeicosatetraenoate/12-HPETE and 15-hydroperoxyeicosatetraenoate/15-HPETE. It may then act on 12-HPETE to produce hepoxilins, which may show pro-inflammatory properties. Can also peroxidize linoleate ((9Z,12Z)-octadecadienoate) to 13-hydroperoxyoctadecadienoate. May participate in the sequential oxidations of DHA ((4Z,7Z,10Z,13Z,16Z,19Z)-docosahexaenoate) to generate specialized pro-resolving mediators (SPMs)like resolvin D5 ((7S,17S)-diHPDHA) and (7S,14S)-diHPDHA, that actively down-regulate the immune response and have anti-aggregation properties with platelets. Can convert epoxy fatty acids to hydroperoxy-epoxides derivatives followed by an intramolecular nucleophilic substitution leading to the formation of monocyclic endoperoxides. Plays an important role during the maintenance of self-tolerance by peroxidizing membrane-bound phosphatidylethanolamine which can then signal the sorting process for clearance of apoptotic cells during inflammation and prevent an autoimmune response. In addition to its role in the immune and inflammatory responses, this enzyme may play a role in epithelial wound healing in the cornea through production of lipoxin A4 (LXA(4)) and docosahexaenoic acid-derived neuroprotectin D1 (NPD1; 10R,17S-HDHA), both lipid autacoids exhibit anti-inflammatory and neuroprotective properties. Furthermore, it may regulate actin polymerization which is crucial for several biological processes such as the phagocytosis of apoptotic cells. It is also implicated in the generation of endogenous ligands for peroxisome proliferator activated receptor (PPAR-gamma), hence modulating macrophage development and function. It may also exert a negative effect on skeletal development by regulating bone mass through this pathway. As well as participates in ER stress and downstream inflammation in adipocytes, pancreatic islets, and liver. Finally, it is also involved in the cellular response to IL13/interleukin-13. This Oryctolagus cuniculus (Rabbit) protein is Polyunsaturated fatty acid lipoxygenase ALOX15.